A 293-amino-acid chain; its full sequence is Lysosomal amino acid transporter 1 homolog (293 aa).

The Lumenal portion of the chain corresponds to 1–37; it reads MVWRTLVASNFSTCPNGSIQWIWDVFGECAQDGWDEA. The N-linked (GlcNAc...) asparagine glycan is linked to Asn10. The 67-residue stretch at 34–100 folds into the PQ-loop 1 domain; the sequence is WDEASVALGL…LADQLPLQTY (67 aa). Residues 38–58 form a helical membrane-spanning segment; that stretch reads SVALGLVSIFCFAASTFPQYI. The Cytoplasmic segment spans residues 59-71; it reads KACKTGNMDQALS. The chain crosses the membrane as a helical span at residues 72-92; sequence LWFLLGWIGGDSCNLIGSFLA. The Lumenal segment spans residues 93–96; the sequence is DQLP. Residues 97–117 traverse the membrane as a helical segment; the sequence is LQTYTAVYYVLADLLMLTLYF. At 118-126 the chain is on the cytoplasmic side; it reads HYKFKKQPS. A helical transmembrane segment spans residues 127-147; it reads LLSAPINSVLLFILGTVCITP. Topologically, residues 148-182 are lumenal; sequence LLSSTDPVAVPREGFRGRTLLSVEPGNKPFTKKEV. A helical transmembrane segment spans residues 183–203; the sequence is VGFVIGSASSVLYLLSRLPQI. The 53-residue stretch at 191–243 folds into the PQ-loop 2 domain; sequence SSVLYLLSRLPQIRTNFVRQSTQGISYSLFALVMLGNTLYGLSVLLKNPEVGQ. Residues 204-214 are Cytoplasmic-facing; that stretch reads RTNFVRQSTQG. A helical transmembrane segment spans residues 215–235; that stretch reads ISYSLFALVMLGNTLYGLSVL. The Lumenal segment spans residues 236-254; that stretch reads LKNPEVGQSEGSYLLHHLP. Residues 255–275 traverse the membrane as a helical segment; the sequence is WLVGSLGVLLLDTIISIQFLV. At 276–293 the chain is on the cytoplasmic side; that stretch reads YRSHDADAASEREPLLPS. The Di-leucine motif motif lies at 290–291; that stretch reads LL.

It belongs to the laat-1 family.

Its subcellular location is the lysosome membrane. Amino acid transporter that specifically mediates the pH-dependent export of the cationic amino acids arginine, histidine and lysine from lysosomes. The sequence is that of Lysosomal amino acid transporter 1 homolog (Slc66a1) from Rattus norvegicus (Rat).